The chain runs to 310 residues: Membrane protein insertase YidC 2 (310 aa).

A signal peptide spans 1-23; that stretch reads MKKTLKRILFSSLSLSMLLLLTG. Cysteine 24 carries the N-palmitoyl cysteine lipid modification. The S-diacylglycerol cysteine moiety is linked to residue cysteine 24. The next 5 membrane-spanning stretches (helical) occupy residues 33 to 53, 58 to 78, 135 to 155, 180 to 200, and 219 to 239; these read PYGVIWNTLGVPMANLITYFA, LGFGVAIIIVTVIVRVVILPL, FGGIGCLPLLIQMPFFSAIFF, LTVIIAILYFVQSWLSMQGVP, and VFMSISLPASVALYWFIGGIF. The segment at 266–310 is disordered; the sequence is NPPKAYKANNARKDVTNSTKATESNQAIITSKKTNRNAGKQKRRG. Residues 281–297 show a composition bias toward polar residues; that stretch reads TNSTKATESNQAIITSK. Over residues 298–310 the composition is skewed to basic residues; it reads KTNRNAGKQKRRG.

This sequence belongs to the OXA1/ALB3/YidC family. Type 2 subfamily.

It localises to the cell membrane. Functionally, required for the insertion and/or proper folding and/or complex formation of integral membrane proteins into the membrane. Involved in integration of membrane proteins that insert both dependently and independently of the Sec translocase complex, as well as at least some lipoproteins. The polypeptide is Membrane protein insertase YidC 2 (Streptococcus agalactiae serotype V (strain ATCC BAA-611 / 2603 V/R)).